The chain runs to 554 residues: MKEQLRACILKGIEGCFADGTLTSGEVPAINVEKPAHAEHGDFATNVAMQMAKQQRKAPRAVAEILVAKLAGASDLIESLEIAGPGFINFFIKDGAWRRTLSEIDRAGDAWGKSGIGRGKKVQVEFVSANPTGPLHIGHGRGAATGDAVASLLSAAGFDVQREYYINDAGNQMNTLGLSGLLRYKELLGEKIEFPETCYQGDYMKDIARDAVTKYGDRFLKVSQEEGVAFFSKMGGDLILAGIDQDLQDFGVRFDHWFSEQSLFDEGKVNSAIEEMQAKGLIYEQEGALWFRTTDYGDDKDRVVVRSNGVTTYFASDIAYHRDKFARGFDWVIDVWGADHHGYVPRLKSVVQGLGRDASDLGIILVQLVSLLRDGVPVAMSTRSGEFVTLKEVVDEVGRDAARFFFLMRRSDSQLDFDLELAKRQSNDNPVYYVQYAHARIKSIFDTARERGVEPLFDSVKFELLQTPEDLSLIKKLSVYPEILEGGAVNFEPHRITYYLQELAGEFHSFYNKSRVITPEEPELTQARLFLLHCVAITLKNALTVLGISAPERM.

The 'HIGH' region signature appears at 129 to 139 (ANPTGPLHIGH).

The protein belongs to the class-I aminoacyl-tRNA synthetase family. Monomer.

Its subcellular location is the cytoplasm. The enzyme catalyses tRNA(Arg) + L-arginine + ATP = L-arginyl-tRNA(Arg) + AMP + diphosphate. This Geobacter sp. (strain M21) protein is Arginine--tRNA ligase.